Reading from the N-terminus, the 537-residue chain is Beta-1-syntrophin (537 aa).

A2 is modified (N-acetylalanine). PH domains lie at 18-297 and 321-432; these read RAQR…SNAG and EIRH…QGCH. S86, S125, and S204 each carry phosphoserine. Residues 111–194 form the PDZ domain; that stretch reads GVKVLKQELG…EVLLEVKYMR (84 aa). Residues 204–233 form a disordered region; that stretch reads SPVSEIGWETPPPESPRLGGGSAEPLSSQS. Position 213 is a phosphothreonine (T213). S218, S225, S231, S235, and S388 each carry phosphoserine. Residues 481–537 form the SU domain; the sequence is PYEKLKMSSDDGIRMLYLDFGGKEGEIQLDLHSCPKPIVFIIHSFLSAKITRLGLVA. The interval 517 to 537 is calmodulin-binding; that stretch reads PIVFIIHSFLSAKITRLGLVA.

The protein belongs to the syntrophin family. Monomer and homodimer. Interacts with the viral HTLV-1 TAX protein and other members of the syntrophin family: SNTA1 and SNTB2. Interacts with the dystrophin protein DMD and related proteins DTNA and UTRN and with the sodium channel proteins SCN4A and SCN5A. Interacts with DTNB. Post-translationally, phosphorylated by CaM-kinase II. Ubiquitous. Expressed at high levels in the liver.

It localises to the cell membrane. The protein localises to the sarcolemma. Its subcellular location is the cell junction. It is found in the cytoplasm. The protein resides in the cytoskeleton. Functionally, adapter protein that binds to and probably organizes the subcellular localization of a variety of membrane proteins. May link various receptors to the actin cytoskeleton and the dystrophin glycoprotein complex. This Mus musculus (Mouse) protein is Beta-1-syntrophin (Sntb1).